The sequence spans 895 residues: MERASERRTASALFAGFRALGLFSNDIPHVVRFSALKRRFYVTTCVGKSFHTYDVQKLSLVAVSNSVPQDICCMAADGRLVFAAYGNVFSAFARNKEIVHTFKGHKAEIHFLQPFGDHIISVDTDGILIIWHIYSEEEYLQLTFDKSVFKISAILHPSTYLNKILLGSEQGSLQLWNVKSNKLLYTFPGWKVGVTALQQAPAVDVVAIGLMSGQVIIHNIKFNETLMKFRQDWGPITSISFRTDGHPVMAAGSPCGHIGLWDLEDKKLINQMRNAHSTAIAGLTFLHREPLLVTNGADNALRIWIFDGPTGEGRLLRFRMGHSAPLTNIRYYGQNGQQILSASQDGTLQSFSTVHEKFNKSLGHGLINKKRVKRKGLQNTMSVRLPPITKFAAEEARESDWDGIIACHQGKLSCSTWNYQKSTIGAYFLKPKELKKDDITATAVDITSCGNFAVIGLSSGTVDVYNMQSGIHRGSFGKDQAHKGSVRGVAVDGLNQLTVTTGSEGLLKFWNFKNKILIHSVSLSSSPNIMLLHRDSGILGLALDDFSISVLDIETRKIVREFSGHQGQINDMAFSPDGRWLISAAMDCSIRTWDLPSGCLIDCFLLDSAPLNVSMSPTGDFLATSHVDHLGIYLWSNISLYSVVSLRPLPADYVPSIVMLPGTCQTQDVEVSEETVEPSDELIEYDSPEQLNEQLVTLSLLPESRWKNLLNLDVIKKKNKPKEPPKVPKSAPFFIPTIPGLVPRYAAPEQNNDPQQSKVVNLGVLAQKSDFCLKLEEGLVNNKYDTALNLLKESGPSGIETELRSLSPDCGGSIEVMQSFLKMIGMMLDRKRDFELAQAYLALFLKLHLKMLPSEPVLLEEITNLSSQVEENWTHLQSLFNQSMCILNYLKSALL.

8 WD repeats span residues 30–63 (VVRFSALKRRFYVTTCVGKSFHTYDVQKLSLVAV), 72–101 (CCMAADGRLVFAAYGNVFSAFARNKEIVHT), 110–143 (HFLQPFGDHIISVDTDGILIIWHIYSEEEYLQLT), 152–186 (SAILHPSTYLNKILLGSEQGSLQLWNVKSNKLLYT), 193–230 (GVTALQQAPAVDVVAIGLMSGQVIIHNIKFNETLMKFR), 237–272 (TSISFRTDGHPVMAAGSPCGHIGLWDLEDKKLINQM), 277–320 (STAI…RFRM), and 327–361 (TNIRYYGQNGQQILSASQDGTLQSFSTVHEKFNKS). S382 and S399 each carry phosphoserine. 6 WD repeats span residues 389–428 (TKFAAEEARESDWDGIIACHQGKLSCSTWNYQKSTIGAYF), 441–475 (ATAVDITSCGNFAVIGLSSGTVDVYNMQSGIHRGS), 486–522 (VRGVAVDGLNQLTVTTGSEGLLKFWNFKNKILIHSVS), 527–562 (PNIMLLHRDSGILGLALDDFSISVLDIETRKIVREF), 564–605 (GHQG…DCFL), and 607–645 (DSAPLNVSMSPTGDFLATSHVDHLGIYLWSNISLYSVVS).

Part of the small subunit (SSU) processome, composed of more than 70 proteins and the RNA chaperone small nucleolar RNA (snoRNA) U3. Expressed in heart, placenta, liver, skeletal muscle, kidney and pancreas. In ocular tissues, strong expression in iris, sclera, ciliary muscle, ciliary body, retina and optic nerve.

It is found in the nucleus. The protein resides in the nucleolus. Its function is as follows. Part of the small subunit (SSU) processome, first precursor of the small eukaryotic ribosomal subunit. During the assembly of the SSU processome in the nucleolus, many ribosome biogenesis factors, an RNA chaperone and ribosomal proteins associate with the nascent pre-rRNA and work in concert to generate RNA folding, modifications, rearrangements and cleavage as well as targeted degradation of pre-ribosomal RNA by the RNA exosome. Involved in the nucleolar processing of SSU 18S rRNA. Involved in T-cell activation and highly coregulated with IL2. The protein is WD repeat-containing protein 36 of Homo sapiens (Human).